The sequence spans 290 residues: ATP synthase gamma chain (290 aa).

Belongs to the ATPase gamma chain family. F-type ATPases have 2 components, CF(1) - the catalytic core - and CF(0) - the membrane proton channel. CF(1) has five subunits: alpha(3), beta(3), gamma(1), delta(1), epsilon(1). CF(0) has three main subunits: a, b and c.

It is found in the cell membrane. Its function is as follows. Produces ATP from ADP in the presence of a proton gradient across the membrane. The gamma chain is believed to be important in regulating ATPase activity and the flow of protons through the CF(0) complex. The polypeptide is ATP synthase gamma chain (Roseiflexus castenholzii (strain DSM 13941 / HLO8)).